The primary structure comprises 1142 residues: DNA-directed RNA polymerase subunit beta N-terminal section (1142 aa).

The protein belongs to the RNA polymerase beta chain family. In plastids the minimal PEP RNA polymerase catalytic core is composed of four subunits: alpha, beta, beta', and beta''. When a (nuclear-encoded) sigma factor is associated with the core the holoenzyme is formed, which can initiate transcription.

It localises to the plastid. Its subcellular location is the chloroplast. It carries out the reaction RNA(n) + a ribonucleoside 5'-triphosphate = RNA(n+1) + diphosphate. In terms of biological role, DNA-dependent RNA polymerase catalyzes the transcription of DNA into RNA using the four ribonucleoside triphosphates as substrates. In Pleurastrum terricola (Filamentous green alga), this protein is DNA-directed RNA polymerase subunit beta N-terminal section (rpoB1).